Here is an 89-residue protein sequence, read N- to C-terminus: MAKKSKVIKELKRQKLVEQYADIRRELKAKGDWEALSKLPRDSAPARLHNRCTVTGRPRGYMRKFKLSRIAFRELAHKGRIPGVKKASW.

It belongs to the universal ribosomal protein uS14 family. Part of the 30S ribosomal subunit. Contacts proteins S3 and S10.

Functionally, binds 16S rRNA, required for the assembly of 30S particles and may also be responsible for determining the conformation of the 16S rRNA at the A site. The protein is Small ribosomal subunit protein uS14A of Bacillus velezensis (strain DSM 23117 / BGSC 10A6 / LMG 26770 / FZB42) (Bacillus amyloliquefaciens subsp. plantarum).